A 1222-amino-acid chain; its full sequence is Deubiquitinating protein VCPIP1 (1222 aa).

Residues 1–21 (MSQPPPPPPPLPPPPPPPEAP) show a composition bias toward pro residues. The interval 1-36 (MSQPPPPPPPLPPPPPPPEAPQTPSSLASAAASGGL) is disordered. Low complexity predominate over residues 25–36 (SSLASAAASGGL). Positions 208 to 361 (LIPVHVDGDG…RNHYIPLVGI (154 aa)) constitute an OTU domain. Asp216 is a catalytic residue. Cys219 (nucleophile) is an active-site residue. Residue His354 is part of the active site. The residue at position 408 (Lys408) is an N6-acetyllysine. 3 disordered regions span residues 725 to 776 (SVMQ…KEKK), 989 to 1009 (EATT…LGSG), and 1024 to 1074 (AFQG…VFTA). A phosphoserine mark is found at Ser747 and Ser757. Residues 755-771 (PSSAPATPTKAPYSPTT) show a composition bias toward low complexity. A Phosphothreonine modification is found at Thr763. Ser768, Ser994, and Ser998 each carry phosphoserine. Residues 1041 to 1050 (LDPRARETSV) show a composition bias toward basic and acidic residues. Residues 1057 to 1074 (GTDFSNSSTKTEPSVFTA) are compositionally biased toward polar residues. Residue Ser1077 is modified to Phosphoserine. Disordered regions lie at residues 1113-1175 (VSSI…TETT) and 1188-1222 (ATRS…MDHS). The span at 1143-1157 (VVSSSAKSGSLQTGL) shows a compositional bias: polar residues. Over residues 1163–1175 (LTGGTENLNTETT) the composition is skewed to low complexity. Position 1198 is a phosphoserine (Ser1198). A compositionally biased stretch (acidic residues) spans 1200-1209 (EELEEMDSQD). Ser1207 carries the phosphoserine; by ATM modification. Residues 1210–1222 (AEMTNTTEPMDHS) show a composition bias toward polar residues.

In terms of assembly, binds VCP and the ternary complex containing STX5A, NSFL1C and VCP. Phosphorylated at Ser-1207 by ATM or ATR following induction of covalent DNA-protein cross-links (DPCs).

The protein resides in the nucleus. Its subcellular location is the cytoplasm. It localises to the endoplasmic reticulum. It is found in the golgi apparatus. The protein localises to the golgi stack. The catalysed reaction is Thiol-dependent hydrolysis of ester, thioester, amide, peptide and isopeptide bonds formed by the C-terminal Gly of ubiquitin (a 76-residue protein attached to proteins as an intracellular targeting signal).. Functionally, deubiquitinating enzyme involved in DNA repair and reassembly of the Golgi apparatus and the endoplasmic reticulum following mitosis. Necessary for VCP-mediated reassembly of Golgi stacks after mitosis. Plays a role in VCP-mediated formation of transitional endoplasmic reticulum (tER). Mediates dissociation of the ternary complex containing STX5A, NSFL1C and VCP. Also involved in DNA repair following phosphorylation by ATM or ATR: acts by catalyzing deubiquitination of SPRTN, thereby promoting SPRTN recruitment to chromatin and subsequent proteolytic cleavage of covalent DNA-protein cross-links (DPCs). Hydrolyzes 'Lys-11'- and 'Lys-48'-linked polyubiquitin chains. (Microbial infection) Regulates the duration of C.botulinum neurotoxin type A (BoNT/A) intoxication by catalyzing deubiquitination of Botulinum neurotoxin A light chain (LC), thereby preventing LC degradation by the proteasome, and accelerating botulinum neurotoxin intoxication in patients. The polypeptide is Deubiquitinating protein VCPIP1 (Homo sapiens (Human)).